Consider the following 115-residue polypeptide: Methylmalonyl-CoA decarboxylase subunit delta (115 aa).

Residues 11–31 (WLIMAINMTVVFAVLIALGIL) traverse the membrane as a helical segment. Positions 46-70 (EAPAATAPVATPTATPVAPANASAQ) are disordered. The span at 48 to 65 (PAATAPVATPTATPVAPA) shows a compositional bias: low complexity.

The protein belongs to the OadG family. As to quaternary structure, the methylmalonyl-CoA decarboxylase is composed of five subunits: the carboxyltransferase alpha subunit (MmdA), the tunnel beta subunit (MmdB), the biotin-containing gamma subunit (MmdC), and the delta (MmdD) and epsilon (MmdE) subunits. Post-translationally, the N-terminus is blocked.

It is found in the cell membrane. The catalysed reaction is (S)-methylmalonyl-CoA + Na(+)(in) + H(+)(out) = propanoyl-CoA + Na(+)(out) + CO2. Completely inhibited by avidin. Subunit of the sodium ion pump methylmalonyl-CoA decarboxylase, which converts the chemical energy of a decarboxylation reaction into an electrochemical gradient of Na(+) ions across the cytoplasmic membrane, thereby creating a sodium ion motive force that is used for ATP synthesis. The delta subunit is required for catalytic activity as well as for the proper assembly of the individual subunits to an enzyme complex. Can also convert malonyl-CoA into acetyl-CoA. The chain is Methylmalonyl-CoA decarboxylase subunit delta from Veillonella parvula (Staphylococcus parvulus).